The following is a 155-amino-acid chain: Ribosomal RNA large subunit methyltransferase H (155 aa).

S-adenosyl-L-methionine-binding residues include Leu-72 and Gly-104.

This sequence belongs to the RNA methyltransferase RlmH family. As to quaternary structure, homodimer.

It is found in the cytoplasm. The catalysed reaction is pseudouridine(1915) in 23S rRNA + S-adenosyl-L-methionine = N(3)-methylpseudouridine(1915) in 23S rRNA + S-adenosyl-L-homocysteine + H(+). Functionally, specifically methylates the pseudouridine at position 1915 (m3Psi1915) in 23S rRNA. This chain is Ribosomal RNA large subunit methyltransferase H, found in Fusobacterium nucleatum subsp. nucleatum (strain ATCC 25586 / DSM 15643 / BCRC 10681 / CIP 101130 / JCM 8532 / KCTC 2640 / LMG 13131 / VPI 4355).